Here is a 139-residue protein sequence, read N- to C-terminus: Tetra-peptide repeat homeobox-like protein (139 aa).

2 disordered regions span residues 1–22 and 78–139; these read MQDP…RQRQ and ERWF…QQPQ. Positions 20–79 form a DNA-binding region, homeobox; it reads QRQDRTIYNWKQQEVLENHFKEEQYPDYDTRQELAEMLNLREYQVQVWFKNRRAKRSRER. Over residues 82 to 139 the composition is skewed to low complexity; it reads QKQLQQLQKHPQQQHPQQQHPQQQLQQQQPQQQPQQQQPQQQPQQQQPQQQQLHQQPQ.

It belongs to the paired homeobox family.

The protein localises to the nucleus. Its function is as follows. Transcription factor required for zygotic genome activation (ZGA), a critical event in early embryonic development during which the developmental control passes from maternally provided mRNAs to the expression of the zygotic genome after fertilization. Protein produced from maternal transcripts that binds and activates expression of key ZGA marker genes, such as NANOGNB, ZSCAN4, DUXB, KLF5 and DPPA3. Binds to regulatory DNA sequences containing a 5'-TAATCC-3' sequence motif. This is Tetra-peptide repeat homeobox-like protein from Homo sapiens (Human).